Consider the following 111-residue polypeptide: Cytochrome c (111 aa).

Alanine 1 is modified (N-acetylalanine). Heme c-binding residues include cysteine 22, cysteine 25, and histidine 26. Residue lysine 80 is modified to N6,N6,N6-trimethyllysine. Position 88 (methionine 88) interacts with heme c. Position 94 is an N6,N6,N6-trimethyllysine (lysine 94).

This sequence belongs to the cytochrome c family. Post-translationally, binds 1 heme c group covalently per subunit.

The protein localises to the mitochondrion intermembrane space. Electron carrier protein. The oxidized form of the cytochrome c heme group can accept an electron from the heme group of the cytochrome c1 subunit of cytochrome reductase. Cytochrome c then transfers this electron to the cytochrome oxidase complex, the final protein carrier in the mitochondrial electron-transport chain. This Sesamum indicum (Oriental sesame) protein is Cytochrome c.